We begin with the raw amino-acid sequence, 445 residues long: Phosphatidate cytidylyltransferase 2 (445 aa).

Over residues 1–39 the composition is skewed to basic and acidic residues; the sequence is MTELRQRVAREPEAPPEDKESESEAKADGETASDSESRV. Residues 1–52 form a disordered region; that stretch reads MTELRQRVAREPEAPPEDKESESEAKADGETASDSESRVEAVTQPPSADDTP. Phosphoserine is present on S21. T31 bears the Phosphothreonine mark. 3 positions are modified to phosphoserine: S33, S35, and S37. Phosphothreonine is present on T51. Helical transmembrane passes span 79–99, 132–152, 166–186, 213–233, 262–282, and 340–360; these read MIAFFFIIIYLGPMVLMMIVM, FLLCVNYFFYGETVTDYFFTL, HRFISFTLYLTGFCMFVLSLV, LVIHNLFEGMIWFIVPISCVI, GFIGGFFATVVFGLLLSYVMS, and IALSTFASLIGPFGGFFASGF.

It belongs to the CDS family. Homodimer.

It is found in the endoplasmic reticulum membrane. The enzyme catalyses a 1,2-diacyl-sn-glycero-3-phosphate + CTP + H(+) = a CDP-1,2-diacyl-sn-glycerol + diphosphate. It catalyses the reaction 1-octadecanoyl-2-(5Z,8Z,11Z,14Z-eicosatetraenoyl)-sn-glycero-3-phosphate + CTP + H(+) = 1-octadecanoyl-2-(5Z,8Z,11Z,14Z-eicosatetraenoyl)-sn-glycero-3-cytidine-5'-diphosphate + diphosphate. The catalysed reaction is 1-octadecanoyl-2-(9Z,12Z-octadecadienoyl)-sn-glycero-3-phosphate + CTP + H(+) = 1-octadecanoyl-2-(9Z,12Z-octadecadienoyl)-sn-glycero-3-cytidine-5'-diphosphate + diphosphate. It carries out the reaction 1-hexadecanoyl-2-(5Z,8Z,11Z,14Z-eicosatetraenoyl)-sn-glycero-3-phosphate + CTP + H(+) = 1-hexadecanoyl-2-(5Z,8Z,11Z,14Z-eicosatetraenoyl)-sn-glycero-3-cytidine-5'-diphosphate + diphosphate. The enzyme catalyses 1,2-di-(5Z,8Z,11Z,14Z)-eicosatetraenoyl-sn-glycero-3-phosphate + CTP + H(+) = 1,2-di-(5Z,8Z,11Z,14Z-eicosatetraenoyl)-sn-glycero-3-cytidine-5'-diphosphate + diphosphate. It catalyses the reaction 1-octadecanoyl-2-(9Z-octadecenoyl)-sn-glycero-3-phosphate + CTP + H(+) = 1-octadecanoyl-2-(9Z-octadecenoyl)-sn-glycero-3-cytidine-5'-diphosphate + diphosphate. The catalysed reaction is 1-octadecanoyl-2-(4Z,7Z,10Z,13Z,16Z,19Z-docosahexaenoyl)-sn-glycero-3-phosphate + CTP + H(+) = 1-octadecanoyl-2-(4Z,7Z,10Z,13Z,16Z,19Z-docosahexaenoyl)-sn-glycero-3-cytidine-5'-diphosphate + diphosphate. It carries out the reaction 1,2-di-(9Z,12Z-octadecadienoyl)-sn-glycero-3-phosphate + CTP + H(+) = 1,2-di-(9Z,12Z-octadecadienoyl)-sn-glycero-3-cytidine-5'-diphosphate + diphosphate. The enzyme catalyses 1,2-di-(9Z-octadecenoyl)-sn-glycero-3-phosphate + CTP + H(+) = 1,2-di-(9Z-octadecenoyl)-sn-glycero-3-cytidine-5'-diphosphate + diphosphate. It functions in the pathway phospholipid metabolism; CDP-diacylglycerol biosynthesis; CDP-diacylglycerol from sn-glycerol 3-phosphate: step 3/3. Its function is as follows. Catalyzes the conversion of phosphatidic acid (PA) to CDP-diacylglycerol (CDP-DAG), an essential intermediate in the synthesis of phosphatidylglycerol, cardiolipin and phosphatidylinositol. Exhibits specificity for the nature of the acyl chains at the sn-1 and sn-2 positions in the substrate, PA and the preferred acyl chain composition is 1-stearoyl-2-arachidonoyl-sn-phosphatidic acid. Plays an important role in regulating the growth and maturation of lipid droplets which are storage organelles at the center of lipid and energy homeostasis. This chain is Phosphatidate cytidylyltransferase 2 (CDS2), found in Bos taurus (Bovine).